The primary structure comprises 153 residues: Histone H2B.3 (153 aa).

2 stretches are compositionally biased toward basic and acidic residues: residues Met1–Ala10 and Ala20–Lys54. The tract at residues Met1 to Lys60 is disordered. N6-acetyllysine is present on residues Lys41 and Lys42. Residue Lys149 forms a Glycyl lysine isopeptide (Lys-Gly) (interchain with G-Cter in ubiquitin) linkage.

This sequence belongs to the histone H2B family. In terms of assembly, the nucleosome is a histone octamer containing two molecules each of H2A, H2B, H3 and H4 assembled in one H3-H4 heterotetramer and two H2A-H2B heterodimers. The octamer wraps approximately 147 bp of DNA. Post-translationally, the N-terminus is blocked. In terms of processing, can be acetylated to form H2BK33ac and H2BK34ac. Acetylated mainly on the ubiquitinated form. Monoubiquitinated to form H2BK143ub1; which is increased during the light period and may give a specific tag for epigenetic transcriptional activation.

It localises to the nucleus. The protein resides in the chromosome. Its function is as follows. Core component of nucleosome. Nucleosomes wrap and compact DNA into chromatin, limiting DNA accessibility to the cellular machineries which require DNA as a template. Histones thereby play a central role in transcription regulation, DNA repair, DNA replication and chromosomal stability. DNA accessibility is regulated via a complex set of post-translational modifications of histones, also called histone code, and nucleosome remodeling. This chain is Histone H2B.3, found in Chlamydomonas reinhardtii (Chlamydomonas smithii).